A 101-amino-acid polypeptide reads, in one-letter code: Apolipoprotein C-II (101 aa).

The N-terminal stretch at Met-1–Gly-22 is a signal peptide. Positions Asp-23–Gln-28 are cleaved as a propeptide — removed in mature form. Residues Ala-66 to Met-74 form a lipid binding region. Positions Ser-78–Ser-101 are lipoprotein lipase cofactor.

It belongs to the apolipoprotein C2 family. In terms of processing, proapolipoprotein C-II is synthesized as a sialic acid containing glycoprotein which is subsequently desialylated prior to its proteolytic processing. Proapolipoprotein C-II, the major form found in plasma undergoes proteolytic cleavage of its N-terminal hexapeptide to generate the mature form apolipoprotein C-II, which occurs as the minor form in plasma.

The protein resides in the secreted. In terms of biological role, component of chylomicrons, very low-density lipoproteins (VLDL), low-density lipoproteins (LDL), and high-density lipoproteins (HDL) in plasma. Plays an important role in lipoprotein metabolism as an activator of lipoprotein lipase, the enzyme which hydrolyzes the triacylglycerols on chylomicrons and VLDL. The protein is Apolipoprotein C-II (APOC2) of Acinonyx jubatus (Cheetah).